Consider the following 279-residue polypeptide: 2-dehydro-3-deoxyphosphooctonate aldolase (279 aa).

Belongs to the KdsA family.

Its subcellular location is the cytoplasm. It carries out the reaction D-arabinose 5-phosphate + phosphoenolpyruvate + H2O = 3-deoxy-alpha-D-manno-2-octulosonate-8-phosphate + phosphate. It participates in carbohydrate biosynthesis; 3-deoxy-D-manno-octulosonate biosynthesis; 3-deoxy-D-manno-octulosonate from D-ribulose 5-phosphate: step 2/3. It functions in the pathway bacterial outer membrane biogenesis; lipopolysaccharide biosynthesis. The polypeptide is 2-dehydro-3-deoxyphosphooctonate aldolase (Desulfosudis oleivorans (strain DSM 6200 / JCM 39069 / Hxd3) (Desulfococcus oleovorans)).